A 193-amino-acid polypeptide reads, in one-letter code: Probable nicotinate-nucleotide adenylyltransferase (193 aa).

The protein belongs to the NadD family.

It catalyses the reaction nicotinate beta-D-ribonucleotide + ATP + H(+) = deamido-NAD(+) + diphosphate. It functions in the pathway cofactor biosynthesis; NAD(+) biosynthesis; deamido-NAD(+) from nicotinate D-ribonucleotide: step 1/1. Catalyzes the reversible adenylation of nicotinate mononucleotide (NaMN) to nicotinic acid adenine dinucleotide (NaAD). The sequence is that of Probable nicotinate-nucleotide adenylyltransferase from Flavobacterium johnsoniae (strain ATCC 17061 / DSM 2064 / JCM 8514 / BCRC 14874 / CCUG 350202 / NBRC 14942 / NCIMB 11054 / UW101) (Cytophaga johnsonae).